The sequence spans 650 residues: Acetyl-coenzyme A synthetase (650 aa).

CoA is bound by residues 190 to 193 (RGGR), T308, and N332. ATP contacts are provided by residues 384–386 (GEP), 408–413 (DTWWQT), D497, and R512. S520 is a binding site for CoA. Residue R523 participates in ATP binding. Mg(2+) contacts are provided by V534, H536, and V539. Residue R581 participates in CoA binding. An N6-acetyllysine modification is found at K606.

It belongs to the ATP-dependent AMP-binding enzyme family. Requires Mg(2+) as cofactor. In terms of processing, acetylated. Deacetylation by the SIR2-homolog deacetylase activates the enzyme.

The enzyme catalyses acetate + ATP + CoA = acetyl-CoA + AMP + diphosphate. In terms of biological role, catalyzes the conversion of acetate into acetyl-CoA (AcCoA), an essential intermediate at the junction of anabolic and catabolic pathways. AcsA undergoes a two-step reaction. In the first half reaction, AcsA combines acetate with ATP to form acetyl-adenylate (AcAMP) intermediate. In the second half reaction, it can then transfer the acetyl group from AcAMP to the sulfhydryl group of CoA, forming the product AcCoA. The protein is Acetyl-coenzyme A synthetase of Bradyrhizobium sp. (strain ORS 278).